Consider the following 686-residue polypeptide: Methionine--tRNA ligase (686 aa).

Residues 22–32 carry the 'HIGH' region motif; it reads PYANGPIHLGH. 4 residues coordinate Zn(2+): Cys153, Cys156, Cys166, and Cys169. The 'KMSKS' region signature appears at 337-341; that stretch reads KMSKS. Position 340 (Lys340) interacts with ATP. The segment at 547 to 573 is disordered; that stretch reads MLEDSKESTPAPAAAKPKKAATQKADA. The tRNA-binding domain occupies 584 to 686; that stretch reads DFLKVKLRVA…SGAEPGMEVR (103 aa).

The protein belongs to the class-I aminoacyl-tRNA synthetase family. MetG type 1 subfamily. Homodimer. The cofactor is Zn(2+).

The protein resides in the cytoplasm. It catalyses the reaction tRNA(Met) + L-methionine + ATP = L-methionyl-tRNA(Met) + AMP + diphosphate. Is required not only for elongation of protein synthesis but also for the initiation of all mRNA translation through initiator tRNA(fMet) aminoacylation. This is Methionine--tRNA ligase from Alcanivorax borkumensis (strain ATCC 700651 / DSM 11573 / NCIMB 13689 / SK2).